We begin with the raw amino-acid sequence, 180 residues long: NAD(P)H-quinone oxidoreductase subunit J (180 aa).

The segment covering methionine 1–glycine 16 has biased composition (polar residues). A disordered region spans residues methionine 1 to proline 23.

It belongs to the complex I 30 kDa subunit family. In terms of assembly, NDH-1 can be composed of about 15 different subunits; different subcomplexes with different compositions have been identified which probably have different functions.

It localises to the cellular thylakoid membrane. It catalyses the reaction a plastoquinone + NADH + (n+1) H(+)(in) = a plastoquinol + NAD(+) + n H(+)(out). The catalysed reaction is a plastoquinone + NADPH + (n+1) H(+)(in) = a plastoquinol + NADP(+) + n H(+)(out). Functionally, NDH-1 shuttles electrons from an unknown electron donor, via FMN and iron-sulfur (Fe-S) centers, to quinones in the respiratory and/or the photosynthetic chain. The immediate electron acceptor for the enzyme in this species is believed to be plastoquinone. Couples the redox reaction to proton translocation, and thus conserves the redox energy in a proton gradient. Cyanobacterial NDH-1 also plays a role in inorganic carbon-concentration. This is NAD(P)H-quinone oxidoreductase subunit J from Prochlorococcus marinus (strain MIT 9211).